The sequence spans 802 residues: Acetyl-CoA decarbonylase/synthase complex subunit alpha (802 aa).

C69, C72, C73, C75, C80, and C90 together coordinate [4Fe-4S] cluster. A CO-binding site is contributed by H113. The [Ni-4Fe-4S] cluster site is built by H246, C274, and C319. 4Fe-4S ferredoxin-type domains are found at residues 404-432 and 442-473; these read EELK…ISEA and SKFE…VIEK. Positions 413, 416, 419, 423, 451, 454, 457, and 461 each coordinate [4Fe-4S] cluster. C519, C548, and C583 together coordinate [Ni-4Fe-4S] cluster.

It belongs to the Ni-containing carbon monoxide dehydrogenase family. In terms of assembly, heterotetramer of two alpha and two epsilon subunits. The ACDS complex is made up of alpha, epsilon, beta, gamma and delta subunits with a probable stoichiometry of (alpha(2)epsilon(2))(4)-beta(8)-(gamma(1)delta(1))(8). [4Fe-4S] cluster serves as cofactor. [Ni-4Fe-4S] cluster is required as a cofactor.

The enzyme catalyses CO + 2 oxidized [2Fe-2S]-[ferredoxin] + H2O = 2 reduced [2Fe-2S]-[ferredoxin] + CO2 + 2 H(+). It participates in one-carbon metabolism; methanogenesis from acetate. Its function is as follows. Part of the ACDS complex that catalyzes the reversible cleavage of acetyl-CoA, allowing growth on acetate as sole source of carbon and energy. The alpha-epsilon subcomponent functions as a carbon monoxide dehydrogenase. The chain is Acetyl-CoA decarbonylase/synthase complex subunit alpha from Methanococcoides burtonii (strain DSM 6242 / NBRC 107633 / OCM 468 / ACE-M).